The primary structure comprises 453 residues: Serine--tRNA ligase (453 aa).

Residue 249 to 251 coordinates L-serine; the sequence is TSE. ATP is bound by residues 280-282 and V296; that span reads RKE. Residue E303 coordinates L-serine. 367-370 contributes to the ATP binding site; the sequence is EMVS. Residue T404 participates in L-serine binding.

This sequence belongs to the class-II aminoacyl-tRNA synthetase family. Type-1 seryl-tRNA synthetase subfamily. As to quaternary structure, homodimer. The tRNA molecule binds across the dimer.

The protein resides in the cytoplasm. The catalysed reaction is tRNA(Ser) + L-serine + ATP = L-seryl-tRNA(Ser) + AMP + diphosphate + H(+). The enzyme catalyses tRNA(Sec) + L-serine + ATP = L-seryl-tRNA(Sec) + AMP + diphosphate + H(+). It participates in aminoacyl-tRNA biosynthesis; selenocysteinyl-tRNA(Sec) biosynthesis; L-seryl-tRNA(Sec) from L-serine and tRNA(Sec): step 1/1. Functionally, catalyzes the attachment of serine to tRNA(Ser). Is also able to aminoacylate tRNA(Sec) with serine, to form the misacylated tRNA L-seryl-tRNA(Sec), which will be further converted into selenocysteinyl-tRNA(Sec). The polypeptide is Serine--tRNA ligase (Archaeoglobus fulgidus (strain ATCC 49558 / DSM 4304 / JCM 9628 / NBRC 100126 / VC-16)).